The sequence spans 335 residues: Endo-1,4-beta-xylanase S20 (335 aa).

The N-terminal stretch at 1 to 22 (MLRKLVTGALAAALLLSGQSNA) is a signal peptide. The region spanning 39 to 241 (NNKNETGNGN…GSGYVDFTYA (203 aa)) is the GH11 domain. N42 and N78 each carry an N-linked (GlcNAc...) asparagine glycan. The active-site Nucleophile is the E134. The N-linked (GlcNAc...) asparagine glycan is linked to N202. The Proton donor role is filled by E228. A glycan (N-linked (GlcNAc...) asparagine) is linked at N251. Residues 251–291 (NASAPSNNNNNNNNNNDNNGNWNNWNNNNNNNNNNNNNNNN) form a disordered region. The span at 257-291 (NNNNNNNNNNDNNGNWNNWNNNNNNNNNNNNNNNN) shows a compositional bias: low complexity. The CBM1 domain maps to 300–335 (NCAAIWGQCGGSGYNGPKCCKQGSCKQINQWYSQCQ).

The protein belongs to the glycosyl hydrolase 11 (cellulase G) family.

It is found in the secreted. It carries out the reaction Endohydrolysis of (1-&gt;4)-beta-D-xylosidic linkages in xylans.. It participates in glycan degradation; xylan degradation. Functionally, endo-1,4-beta-xylanase involved in the hydrolysis of xylan, a major structural heterogeneous polysaccharide found in plant biomass representing the second most abundant polysaccharide in the biosphere, after cellulose. This chain is Endo-1,4-beta-xylanase S20 (xynS20), found in Neocallimastix patriciarum (Rumen fungus).